A 232-amino-acid chain; its full sequence is Orotidine 5'-phosphate decarboxylase (232 aa).

Substrate contacts are provided by residues Asp-16, Lys-38, 65 to 74 (DLKLHDIGNT), Thr-119, Arg-180, Gln-189, Gly-209, and Arg-210. The Proton donor role is filled by Lys-67.

Belongs to the OMP decarboxylase family. Type 1 subfamily. Homodimer.

The enzyme catalyses orotidine 5'-phosphate + H(+) = UMP + CO2. Its pathway is pyrimidine metabolism; UMP biosynthesis via de novo pathway; UMP from orotate: step 2/2. Functionally, catalyzes the decarboxylation of orotidine 5'-monophosphate (OMP) to uridine 5'-monophosphate (UMP). The sequence is that of Orotidine 5'-phosphate decarboxylase from Methylorubrum populi (strain ATCC BAA-705 / NCIMB 13946 / BJ001) (Methylobacterium populi).